We begin with the raw amino-acid sequence, 104 residues long: Large ribosomal subunit protein uL24 (104 aa).

It belongs to the universal ribosomal protein uL24 family. In terms of assembly, part of the 50S ribosomal subunit.

Functionally, one of two assembly initiator proteins, it binds directly to the 5'-end of the 23S rRNA, where it nucleates assembly of the 50S subunit. In terms of biological role, one of the proteins that surrounds the polypeptide exit tunnel on the outside of the subunit. This is Large ribosomal subunit protein uL24 from Yersinia enterocolitica serotype O:8 / biotype 1B (strain NCTC 13174 / 8081).